The following is a 154-amino-acid chain: UPF0260 protein HI_1355 (154 aa).

The protein belongs to the UPF0260 family.

This chain is UPF0260 protein HI_1355, found in Haemophilus influenzae (strain ATCC 51907 / DSM 11121 / KW20 / Rd).